A 196-amino-acid polypeptide reads, in one-letter code: Large ribosomal subunit protein eL15 (196 aa).

The segment at 153-196 (DPSSRGRATRGKTSAGRKGRGMATRGKGTEKTRPSIRAYKSRGK) is disordered. Over residues 159 to 172 (RATRGKTSAGRKGR) the composition is skewed to basic residues.

Belongs to the eukaryotic ribosomal protein eL15 family.

This chain is Large ribosomal subunit protein eL15, found in Methanosarcina acetivorans (strain ATCC 35395 / DSM 2834 / JCM 12185 / C2A).